We begin with the raw amino-acid sequence, 389 residues long: Type II methyltransferase M2.BsuMI (389 aa).

Positions 1 to 299 constitute an SAM-dependent MTase C5-type domain; the sequence is MKVVSLFSGI…ENLSQPKGSI (299 aa). The active site involves Cys69.

The protein belongs to the class I-like SAM-binding methyltransferase superfamily. C5-methyltransferase family. Monomer. May form a complex with YdiP, also seems to be active alone.

It carries out the reaction a 2'-deoxycytidine in DNA + S-adenosyl-L-methionine = a 5-methyl-2'-deoxycytidine in DNA + S-adenosyl-L-homocysteine + H(+). Its activity is regulated as follows. Somewhat inhibited by MgCl(2) and spermidine, strongly inhibited by MnCl(2). A methylase, recognizes the double-stranded sequence 5'-YTCGAR-3', methylates C-3 on both strands, and protects the DNA from cleavage by the BsuMI endonuclease. The polypeptide is Type II methyltransferase M2.BsuMI (ydiP) (Bacillus subtilis (strain 168)).